The primary structure comprises 427 residues: Glutamate-1-semialdehyde 2,1-aminomutase (427 aa).

At K265 the chain carries N6-(pyridoxal phosphate)lysine.

Belongs to the class-III pyridoxal-phosphate-dependent aminotransferase family. HemL subfamily. As to quaternary structure, homodimer. Requires pyridoxal 5'-phosphate as cofactor.

It is found in the cytoplasm. The enzyme catalyses (S)-4-amino-5-oxopentanoate = 5-aminolevulinate. It participates in porphyrin-containing compound metabolism; protoporphyrin-IX biosynthesis; 5-aminolevulinate from L-glutamyl-tRNA(Glu): step 2/2. In Burkholderia cenocepacia (strain ATCC BAA-245 / DSM 16553 / LMG 16656 / NCTC 13227 / J2315 / CF5610) (Burkholderia cepacia (strain J2315)), this protein is Glutamate-1-semialdehyde 2,1-aminomutase.